The primary structure comprises 122 residues: Serum amyloid A-1 protein (122 aa).

Positions 1-18 are cleaved as a signal peptide; sequence MKLLTGLVFCSLVLGVSS. Positions 19-45 are important for amyloid formation; forms amyloid fibrils in vitro; it reads RSFFSFLGEAFDGARDMWRAYSDMREA. Positions 95–122 are cleaved as a propeptide — often cleaved during amyloidogenesis; sequence LADQAANEWGRSGKDPNHFRPAGLPEKY. Residues 98 to 122 form a disordered region; that stretch reads QAANEWGRSGKDPNHFRPAGLPEKY. An N4,N4-dimethylasparagine modification is found at asparagine 101.

This sequence belongs to the SAA family. As to quaternary structure, homohexamer; dimer of trimers. Can form amyloid fibrils after partial proteolysis; the native, undenatured protein does not form amyloid fibrils (in vitro). Apolipoprotein of the HDL complex. Binds to heparin. This protein is the precursor of amyloid protein A, which is formed by the removal of approximately 24 residues from the C-terminal end. In terms of tissue distribution, expressed by the liver; secreted in plasma (at protein level).

The protein resides in the secreted. Major acute phase protein. In Homo sapiens (Human), this protein is Serum amyloid A-1 protein (SAA1).